The following is a 185-amino-acid chain: Ribosome-recycling factor (185 aa).

It belongs to the RRF family.

Its subcellular location is the cytoplasm. Its function is as follows. Responsible for the release of ribosomes from messenger RNA at the termination of protein biosynthesis. May increase the efficiency of translation by recycling ribosomes from one round of translation to another. This chain is Ribosome-recycling factor, found in Salinispora arenicola (strain CNS-205).